The sequence spans 86 residues: Toxin Cn1 (86 aa).

Positions Met-1–Ala-19 are cleaved as a signal peptide. Residues Lys-20–Ser-84 form the LCN-type CS-alpha/beta domain. 4 disulfides stabilise this stretch: Cys-30–Cys-83, Cys-34–Cys-59, Cys-43–Cys-64, and Cys-47–Cys-66. Ser-84 is subject to Serine amide.

It belongs to the long (4 C-C) scorpion toxin superfamily. Sodium channel inhibitor family. Beta subfamily. In terms of tissue distribution, expressed by the venom gland.

Its subcellular location is the secreted. Beta toxins bind voltage-independently at site-4 of sodium channels (Nav) and shift the voltage of activation toward more negative potentials thereby affecting sodium channel activation and promoting spontaneous and repetitive firing. This Centruroides noxius (Mexican scorpion) protein is Toxin Cn1.